Here is a 359-residue protein sequence, read N- to C-terminus: DNA replication and repair protein RecF (359 aa).

Residue 30–37 coordinates ATP; sequence GPNGSGKT.

Belongs to the RecF family.

The protein localises to the cytoplasm. Its function is as follows. The RecF protein is involved in DNA metabolism; it is required for DNA replication and normal SOS inducibility. RecF binds preferentially to single-stranded, linear DNA. It also seems to bind ATP. This Aliivibrio fischeri (strain MJ11) (Vibrio fischeri) protein is DNA replication and repair protein RecF.